Consider the following 1193-residue polypeptide: DNA-directed RNA polymerase subunit beta (1193 aa).

Residues 1173–1193 form a disordered region; the sequence is QQAKEAAELEKAKEEALDKTE. Residues 1177-1193 show a composition bias toward basic and acidic residues; the sequence is EAAELEKAKEEALDKTE.

It belongs to the RNA polymerase beta chain family. The RNAP catalytic core consists of 2 alpha, 1 beta, 1 beta' and 1 omega subunit. When a sigma factor is associated with the core the holoenzyme is formed, which can initiate transcription.

The enzyme catalyses RNA(n) + a ribonucleoside 5'-triphosphate = RNA(n+1) + diphosphate. Functionally, DNA-dependent RNA polymerase catalyzes the transcription of DNA into RNA using the four ribonucleoside triphosphates as substrates. In Streptococcus thermophilus (strain CNRZ 1066), this protein is DNA-directed RNA polymerase subunit beta.